We begin with the raw amino-acid sequence, 91 residues long: DNA-directed RNA polymerase subunit omega (91 aa).

Belongs to the RNA polymerase subunit omega family. The RNAP catalytic core consists of 2 alpha, 1 beta, 1 beta' and 1 omega subunit. When a sigma factor is associated with the core the holoenzyme is formed, which can initiate transcription.

The enzyme catalyses RNA(n) + a ribonucleoside 5'-triphosphate = RNA(n+1) + diphosphate. Its function is as follows. Promotes RNA polymerase assembly. Latches the N- and C-terminal regions of the beta' subunit thereby facilitating its interaction with the beta and alpha subunits. This chain is DNA-directed RNA polymerase subunit omega, found in Erwinia tasmaniensis (strain DSM 17950 / CFBP 7177 / CIP 109463 / NCPPB 4357 / Et1/99).